We begin with the raw amino-acid sequence, 213 residues long: Orotate phosphoribosyltransferase (213 aa).

Lys-26 provides a ligand contact to 5-phospho-alpha-D-ribose 1-diphosphate. Orotate is bound at residue 34–35; the sequence is FF. 5-phospho-alpha-D-ribose 1-diphosphate is bound by residues 72 to 73, Arg-99, Lys-100, Lys-103, His-105, and 124 to 132; these read YK and DDVITAGTA. Thr-128 and Arg-156 together coordinate orotate.

It belongs to the purine/pyrimidine phosphoribosyltransferase family. PyrE subfamily. In terms of assembly, homodimer. Mg(2+) is required as a cofactor.

The enzyme catalyses orotidine 5'-phosphate + diphosphate = orotate + 5-phospho-alpha-D-ribose 1-diphosphate. The protein operates within pyrimidine metabolism; UMP biosynthesis via de novo pathway; UMP from orotate: step 1/2. In terms of biological role, catalyzes the transfer of a ribosyl phosphate group from 5-phosphoribose 1-diphosphate to orotate, leading to the formation of orotidine monophosphate (OMP). In Vibrio cholerae serotype O1 (strain ATCC 39315 / El Tor Inaba N16961), this protein is Orotate phosphoribosyltransferase.